The following is a 210-amino-acid chain: Protein-L-isoaspartate O-methyltransferase (210 aa).

The active site involves serine 52.

The protein belongs to the methyltransferase superfamily. L-isoaspartyl/D-aspartyl protein methyltransferase family.

Its subcellular location is the cytoplasm. It carries out the reaction [protein]-L-isoaspartate + S-adenosyl-L-methionine = [protein]-L-isoaspartate alpha-methyl ester + S-adenosyl-L-homocysteine. Catalyzes the methyl esterification of L-isoaspartyl residues in peptides and proteins that result from spontaneous decomposition of normal L-aspartyl and L-asparaginyl residues. It plays a role in the repair and/or degradation of damaged proteins. This Protochlamydia amoebophila (strain UWE25) protein is Protein-L-isoaspartate O-methyltransferase.